Here is a 357-residue protein sequence, read N- to C-terminus: Probable cinnamyl alcohol dehydrogenase (357 aa).

Cysteine 47 provides a ligand contact to Zn(2+). Position 49 (serine 49) interacts with NADP(+). Positions 69, 70, 100, 103, 106, 114, and 163 each coordinate Zn(2+). Residues threonine 167, glycine 188–glycine 193, serine 211–lysine 216, threonine 251, glycine 275, and serine 298–isoleucine 300 contribute to the NADP(+) site.

It belongs to the zinc-containing alcohol dehydrogenase family. As to quaternary structure, homodimer. Requires Zn(2+) as cofactor.

The catalysed reaction is (E)-cinnamyl alcohol + NADP(+) = (E)-cinnamaldehyde + NADPH + H(+). It catalyses the reaction (E)-coniferol + NADP(+) = (E)-coniferaldehyde + NADPH + H(+). The enzyme catalyses (E)-sinapyl alcohol + NADP(+) = (E)-sinapaldehyde + NADPH + H(+). It carries out the reaction (E)-4-coumaroyl alcohol + NADP(+) = (E)-4-coumaraldehyde + NADPH + H(+). The catalysed reaction is (E)-caffeyl alcohol + NADP(+) = (E)-caffeyl aldehyde + NADPH + H(+). It participates in aromatic compound metabolism; phenylpropanoid biosynthesis. In terms of biological role, involved in lignin biosynthesis. Catalyzes the final step specific for the production of lignin monomers. Catalyzes the NADPH-dependent reduction of coniferaldehyde, 5-hydroxyconiferaldehyde, sinapaldehyde, 4-coumaraldehyde and caffeyl aldehyde to their respective alcohols. The polypeptide is Probable cinnamyl alcohol dehydrogenase (Pinus taeda (Loblolly pine)).